The sequence spans 82 residues: UPF0335 protein pRhico085 (82 aa).

This sequence belongs to the UPF0335 family.

This chain is UPF0335 protein pRhico085, found in Azospirillum brasilense.